The primary structure comprises 160 residues: Gene 34 protein (160 aa).

Residues 1 to 11 (MDSPRGISTAT) are compositionally biased toward polar residues. Residues 1 to 26 (MDSPRGISTATGDAHAEAAVSPAAEI) form a disordered region.

The chain is Gene 34 protein from Equus caballus (Horse).